The sequence spans 27 residues: Protein YqiM (27 aa).

The chain is Protein YqiM from Escherichia coli (strain K12).